A 363-amino-acid polypeptide reads, in one-letter code: AA9 family lytic polysaccharide monooxygenase I (363 aa).

Positions 1–19 (MSLFKFAAFVLGTAGSVAG) are cleaved as a signal peptide. Cu(2+)-binding residues include H20 and H105. 2 disulfides stabilise this stretch: C75/C197 and C116/C120. 2 residues coordinate O2: H183 and Q192. A Cu(2+)-binding site is contributed by Y194. Positions 248-257 (GSDSNTATSG) are enriched in polar residues. Disordered stretches follow at residues 248 to 270 (GSDSNTATSGASPPSTNFSPTTT) and 298 to 363 (SVSY…RTQS). A compositionally biased stretch (low complexity) spans 258–270 (ASPPSTNFSPTTT). The span at 298–307 (SVSYSQTPWP) shows a compositional bias: polar residues. The segment covering 308 to 329 (SSTATEATSASSSAGGSNNGHT) has biased composition (low complexity). Positions 342 to 354 (TGKKRSRLNRRRM) are enriched in basic residues.

Belongs to the polysaccharide monooxygenase AA9 family. Requires Cu(2+) as cofactor.

The protein localises to the secreted. It catalyses the reaction [(1-&gt;4)-beta-D-glucosyl]n+m + reduced acceptor + O2 = 4-dehydro-beta-D-glucosyl-[(1-&gt;4)-beta-D-glucosyl]n-1 + [(1-&gt;4)-beta-D-glucosyl]m + acceptor + H2O.. In terms of biological role, lytic polysaccharide monooxygenase (LPMO) that depolymerizes crystalline and amorphous polysaccharides via the oxidation of scissile alpha- or beta-(1-4)-glycosidic bonds, yielding C1 or C4 oxidation products. Catalysis by LPMOs requires the reduction of the active-site copper from Cu(II) to Cu(I) by a reducing agent and H(2)O(2) or O(2) as a cosubstrate. The protein is AA9 family lytic polysaccharide monooxygenase I of Emericella nidulans (strain FGSC A4 / ATCC 38163 / CBS 112.46 / NRRL 194 / M139) (Aspergillus nidulans).